Consider the following 183-residue polypeptide: UPF0316 protein BcerKBAB4_3093 (183 aa).

3 helical membrane passes run 6–26 (LIFV…ILLV), 32–52 (SAAG…GIVF), and 58–78 (WMNI…GGYI).

Belongs to the UPF0316 family.

The protein localises to the cell membrane. The sequence is that of UPF0316 protein BcerKBAB4_3093 from Bacillus mycoides (strain KBAB4) (Bacillus weihenstephanensis).